The sequence spans 38 residues: Large ribosomal subunit protein bL36 (38 aa).

The protein belongs to the bacterial ribosomal protein bL36 family.

The chain is Large ribosomal subunit protein bL36 from Psychrobacter cryohalolentis (strain ATCC BAA-1226 / DSM 17306 / VKM B-2378 / K5).